Consider the following 397-residue polypeptide: Riboflavin biosynthesis protein RibBA (397 aa).

Residues 1 to 199 form a DHBP synthase region; that stretch reads MFHRIEEALE…IEDLIAYRRH (199 aa). D-ribulose 5-phosphate is bound by residues 26 to 27, Asp-31, 138 to 142, and Glu-162; these read RE and RAGHT. Residue Glu-27 participates in Mg(2+) binding. Position 141 (His-141) interacts with Mg(2+). Residues 200-397 are GTP cyclohydrolase II; the sequence is HETLVTREVE…VNKLGHLLNL (198 aa). 250-254 lines the GTP pocket; that stretch reads RVHSE. Residues Cys-255, Cys-266, and Cys-268 each contribute to the Zn(2+) site. GTP-binding positions include Gln-271, 293–295, and Thr-315; that span reads EGR. Asp-327 acts as the Proton acceptor; for GTP cyclohydrolase activity in catalysis. Arg-329 (nucleophile; for GTP cyclohydrolase activity) is an active-site residue. The GTP site is built by Thr-350 and Lys-355.

The protein in the N-terminal section; belongs to the DHBP synthase family. In the C-terminal section; belongs to the GTP cyclohydrolase II family. Mg(2+) serves as cofactor. Requires Mn(2+) as cofactor. The cofactor is Zn(2+).

The catalysed reaction is D-ribulose 5-phosphate = (2S)-2-hydroxy-3-oxobutyl phosphate + formate + H(+). It catalyses the reaction GTP + 4 H2O = 2,5-diamino-6-hydroxy-4-(5-phosphoribosylamino)-pyrimidine + formate + 2 phosphate + 3 H(+). The protein operates within cofactor biosynthesis; riboflavin biosynthesis; 2-hydroxy-3-oxobutyl phosphate from D-ribulose 5-phosphate: step 1/1. Its pathway is cofactor biosynthesis; riboflavin biosynthesis; 5-amino-6-(D-ribitylamino)uracil from GTP: step 1/4. Catalyzes the conversion of D-ribulose 5-phosphate to formate and 3,4-dihydroxy-2-butanone 4-phosphate. In terms of biological role, catalyzes the conversion of GTP to 2,5-diamino-6-ribosylamino-4(3H)-pyrimidinone 5'-phosphate (DARP), formate and pyrophosphate. The sequence is that of Riboflavin biosynthesis protein RibBA from Bacillus cereus (strain AH187).